The sequence spans 1252 residues: Putative late blight resistance protein homolog R1B-11 (1252 aa).

Residues arginine 543–glutamine 566 adopt a coiled-coil conformation. NB-ARC domains are found at residues serine 684–isoleucine 736 and serine 786–glycine 830. LRR repeat units follow at residues phenylalanine 955–arginine 980, leucine 998–methionine 1026, leucine 1077–serine 1100, phenylalanine 1103–alanine 1125, phenylalanine 1126–aspartate 1149, leucine 1187–serine 1212, and leucine 1213–alanine 1236. Residues valine 1188–leucine 1252 form the HMA domain.

The protein belongs to the disease resistance NB-LRR family.

The protein resides in the cytoplasm. Its subcellular location is the membrane. Confers resistance to late blight (Phytophthora infestans) races carrying the avirulence gene Avr1. Resistance proteins guard the plant against pathogens that contain an appropriate avirulence protein via an indirect interaction with this avirulence protein. That triggers a defense system including the hypersensitive response, which restricts the pathogen growth. This chain is Putative late blight resistance protein homolog R1B-11 (R1B-11), found in Solanum demissum (Wild potato).